Reading from the N-terminus, the 150-residue chain is Pyruvoyl-dependent arginine decarboxylase (150 aa).

Pyruvic acid (Ser) is present on Ser42.

It belongs to the PdaD family. Pyruvate serves as cofactor.

It carries out the reaction L-arginine + H(+) = agmatine + CO2. This Methanopyrus kandleri (strain AV19 / DSM 6324 / JCM 9639 / NBRC 100938) protein is Pyruvoyl-dependent arginine decarboxylase.